The following is a 263-amino-acid chain: 4-hydroxy-tetrahydrodipicolinate reductase (263 aa).

10 to 15 (GASGKM) serves as a coordination point for NAD(+). R38 is an NADP(+) binding site. Residues 97–99 (GTT) and 123–126 (APNF) each bind NAD(+). H153 functions as the Proton donor/acceptor in the catalytic mechanism. H154 contacts (S)-2,3,4,5-tetrahydrodipicolinate. K157 functions as the Proton donor in the catalytic mechanism. 163-164 (GT) is a binding site for (S)-2,3,4,5-tetrahydrodipicolinate.

Belongs to the DapB family.

The protein resides in the cytoplasm. It carries out the reaction (S)-2,3,4,5-tetrahydrodipicolinate + NAD(+) + H2O = (2S,4S)-4-hydroxy-2,3,4,5-tetrahydrodipicolinate + NADH + H(+). The catalysed reaction is (S)-2,3,4,5-tetrahydrodipicolinate + NADP(+) + H2O = (2S,4S)-4-hydroxy-2,3,4,5-tetrahydrodipicolinate + NADPH + H(+). The protein operates within amino-acid biosynthesis; L-lysine biosynthesis via DAP pathway; (S)-tetrahydrodipicolinate from L-aspartate: step 4/4. In terms of biological role, catalyzes the conversion of 4-hydroxy-tetrahydrodipicolinate (HTPA) to tetrahydrodipicolinate. The sequence is that of 4-hydroxy-tetrahydrodipicolinate reductase from Dehalococcoides mccartyi (strain CBDB1).